Consider the following 239-residue polypeptide: Small ribosomal subunit protein uS3 (239 aa).

The KH type-2 domain occupies 38-106; sequence IRELIEERFK…KTFVNVVEIK (69 aa).

Belongs to the universal ribosomal protein uS3 family. In terms of assembly, part of the 30S ribosomal subunit. Forms a tight complex with proteins S10 and S14.

In terms of biological role, binds the lower part of the 30S subunit head. Binds mRNA in the 70S ribosome, positioning it for translation. In Elusimicrobium minutum (strain Pei191), this protein is Small ribosomal subunit protein uS3.